The sequence spans 1349 residues: DNA-directed RNA polymerase subunit beta' (1349 aa).

Residues cysteine 219, cysteine 293, cysteine 300, and cysteine 303 each contribute to the Zn(2+) site. Residues 1298 to 1349 (LDSPTLGESGFGSRRAERSVLDDEDELIADEVVDDDDFEEEEEDDEDDFDDE) form a disordered region. Residues 1319-1349 (DDEDELIADEVVDDDDFEEEEEDDEDDFDDE) show a composition bias toward acidic residues.

The protein belongs to the RNA polymerase beta' chain family. RpoC2 subfamily. In terms of assembly, in cyanobacteria the RNAP catalytic core is composed of 2 alpha, 1 beta, 1 beta', 1 gamma and 1 omega subunit. When a sigma factor is associated with the core the holoenzyme is formed, which can initiate transcription. Zn(2+) is required as a cofactor.

It carries out the reaction RNA(n) + a ribonucleoside 5'-triphosphate = RNA(n+1) + diphosphate. Functionally, DNA-dependent RNA polymerase catalyzes the transcription of DNA into RNA using the four ribonucleoside triphosphates as substrates. The protein is DNA-directed RNA polymerase subunit beta' of Nostoc punctiforme (strain ATCC 29133 / PCC 73102).